Here is a 630-residue protein sequence, read N- to C-terminus: Glutathione hydrolase proenzyme 1 (630 aa).

Residues 1–49 (MGINTSSAQSSGAASIARSSVNVKSGNRHLSSNKKSATSALEERASRPS) lie on the Cytoplasmic side of the membrane. A helical; Signal-anchor for type II membrane protein membrane pass occupies residues 50–70 (ILVTFLVLAGTILSLYIWPIL). The Lumenal segment spans residues 71–630 (SPDLFFANQR…SRKQAVAAAY (560 aa)). N-linked (GlcNAc...) asparagine glycosylation occurs at N156. R165 lines the L-glutamate pocket. N180, N315, N397, and N417 each carry an N-linked (GlcNAc...) asparagine glycan. T441 (nucleophile) is an active-site residue. L-glutamate contacts are provided by residues S459, N461, D483, 511-512 (SS), and 532-533 (GG). N612 carries an N-linked (GlcNAc...) asparagine glycan.

It belongs to the gamma-glutamyltransferase family. As to quaternary structure, heterodimer composed of the light and heavy chains. The active site is located in the light chain. Cleaved by autocatalysis into a large and a small subunit.

It localises to the endoplasmic reticulum membrane. It carries out the reaction an N-terminal (5-L-glutamyl)-[peptide] + an alpha-amino acid = 5-L-glutamyl amino acid + an N-terminal L-alpha-aminoacyl-[peptide]. The catalysed reaction is glutathione + H2O = L-cysteinylglycine + L-glutamate. It catalyses the reaction an S-substituted glutathione + H2O = an S-substituted L-cysteinylglycine + L-glutamate. It participates in sulfur metabolism; glutathione metabolism. Its function is as follows. Catalyzes the transfer of the gamma-glutamyl moiety of glutathione (GSH) and other gamma-glutamyl compounds to amino acids and peptides. Major GSH-degrading enzyme, catalyzing the hydrolytic release of L-glutamate from GSH. This is Glutathione hydrolase proenzyme 1 (ggt1) from Schizosaccharomyces pombe (strain 972 / ATCC 24843) (Fission yeast).